Reading from the N-terminus, the 474-residue chain is 3-isopropylmalate dehydratase large subunit (474 aa).

[4Fe-4S] cluster contacts are provided by cysteine 355, cysteine 415, and cysteine 418.

The protein belongs to the aconitase/IPM isomerase family. LeuC type 1 subfamily. As to quaternary structure, heterodimer of LeuC and LeuD. Requires [4Fe-4S] cluster as cofactor.

It catalyses the reaction (2R,3S)-3-isopropylmalate = (2S)-2-isopropylmalate. It participates in amino-acid biosynthesis; L-leucine biosynthesis; L-leucine from 3-methyl-2-oxobutanoate: step 2/4. Catalyzes the isomerization between 2-isopropylmalate and 3-isopropylmalate, via the formation of 2-isopropylmaleate. The polypeptide is 3-isopropylmalate dehydratase large subunit (Shewanella sp. (strain W3-18-1)).